Here is a 240-residue protein sequence, read N- to C-terminus: Transcriptional regulatory protein ChvI (240 aa).

Residues 3 to 116 form the Response regulatory domain; the sequence is TIALVDDDRN…LLVERVKAIL (114 aa). Residues aspartate 8, aspartate 9, and aspartate 52 each contribute to the Mg(2+) site. Aspartate 52 is modified (4-aspartylphosphate). The segment at residues 139–238 is a DNA-binding region (ompR/PhoB-type); sequence SRSLERGQLV…LYGVGYRFRE (100 aa).

Requires Mg(2+) as cofactor. In terms of processing, phosphorylated by ChvG.

It is found in the cytoplasm. It participates in glycan metabolism; exopolysaccharide biosynthesis. Its function is as follows. Member of a two-component regulatory system ChvG(ExoS)/ChvI involved in regulating the production of succinoglycan. In Rhizobium meliloti (strain 1021) (Ensifer meliloti), this protein is Transcriptional regulatory protein ChvI (chvI).